The chain runs to 136 residues: Aspartate 1-decarboxylase (136 aa).

The active-site Schiff-base intermediate with substrate; via pyruvic acid is serine 25. Position 25 is a pyruvic acid (Ser) (serine 25). Residue threonine 57 participates in substrate binding. Tyrosine 58 serves as the catalytic Proton donor. 73-75 provides a ligand contact to substrate; sequence GAA.

This sequence belongs to the PanD family. In terms of assembly, heterooctamer of four alpha and four beta subunits. The cofactor is pyruvate. In terms of processing, is synthesized initially as an inactive proenzyme, which is activated by self-cleavage at a specific serine bond to produce a beta-subunit with a hydroxyl group at its C-terminus and an alpha-subunit with a pyruvoyl group at its N-terminus.

The protein localises to the cytoplasm. It carries out the reaction L-aspartate + H(+) = beta-alanine + CO2. It participates in cofactor biosynthesis; (R)-pantothenate biosynthesis; beta-alanine from L-aspartate: step 1/1. Catalyzes the pyruvoyl-dependent decarboxylation of aspartate to produce beta-alanine. The polypeptide is Aspartate 1-decarboxylase (Corynebacterium glutamicum (strain R)).